We begin with the raw amino-acid sequence, 400 residues long: Na(+)/H(+) antiporter NhaA (400 aa).

The next 12 membrane-spanning stretches (helical) occupy residues 26–46 (AGGI…NSPL), 71–91 (LIHW…GMEV), 107–127 (IFPA…YWFI), 137–157 (GWAI…ALLS), 166–186 (IFLL…IALF), 189–209 (HGLS…LILL), 212–232 (FKVS…ASVL), 233–253 (KSGV…PLKG), 273–293 (FVIL…GIDV), 299–319 (PLLL…IFGF), 340–360 (IFAV…LASL), and 373–393 (LSRL…YLFL).

This sequence belongs to the NhaA Na(+)/H(+) (TC 2.A.33) antiporter family.

It is found in the cell inner membrane. It catalyses the reaction Na(+)(in) + 2 H(+)(out) = Na(+)(out) + 2 H(+)(in). In terms of biological role, na(+)/H(+) antiporter that extrudes sodium in exchange for external protons. The sequence is that of Na(+)/H(+) antiporter NhaA from Haemophilus influenzae (strain PittEE).